The sequence spans 491 residues: Cytochrome P450 81F2 (491 aa).

The chain crosses the membrane as a helical span at residues 283 to 303 (VIIKGLMLSMMLAGTDTAAVT). C429 is a heme binding site.

The protein belongs to the cytochrome P450 family. The cofactor is heme.

It localises to the membrane. It participates in secondary metabolite biosynthesis. In terms of biological role, involved in indole glucosinolate biosynthesis. Catalyzes hydroxylation reactions of the glucosinolate indole ring. Converts indol-3-yl-methylglucosinolate (I3M) to 4-hydroxy-indol-3-yl-methylglucosinolate (4OH-I3M) and/or 1-hydroxy-indol-3-yl-methylglucosinolate (1OH-I3M) intermediates. These hydroxy intermediates are converted to 4-methoxy-indol-3-yl-methylglucosinolate (4MO-I3M) and 1-methoxy-indol-3-yl-methylglucosinolate (1MO-I3M) by indole glucosinolate methyltransferase 1 and 2 (IGMT1 and IGMT2). Contributes to defense against the green peach aphid (Myzus persicae), a generalist phloem-feeding herbivore. Required for the biosynthesis of antifungal indole glucosinolate metabolites. Required for the pathogen-induced accumulation of 4MO-I3M, which in turn is activated by the atypical BGLU26/PEN2 myrosinase. Required for the biosynthesis of Trp-derived antifungal compounds and non-host resistance to the necrotrophic fungal pathogen Plectosphaerella cucumerina. Required for resistance to the non-adapted fungal pathogen Colletotrichum gloeosporioides. The sequence is that of Cytochrome P450 81F2 from Arabidopsis thaliana (Mouse-ear cress).